We begin with the raw amino-acid sequence, 299 residues long: 33 kDa chaperonin (299 aa).

2 disulfide bridges follow: Cys-234–Cys-236 and Cys-268–Cys-271.

This sequence belongs to the HSP33 family. Under oxidizing conditions two disulfide bonds are formed involving the reactive cysteines. Under reducing conditions zinc is bound to the reactive cysteines and the protein is inactive.

It is found in the cytoplasm. Functionally, redox regulated molecular chaperone. Protects both thermally unfolding and oxidatively damaged proteins from irreversible aggregation. Plays an important role in the bacterial defense system toward oxidative stress. This is 33 kDa chaperonin from Pseudomonas putida (strain ATCC 47054 / DSM 6125 / CFBP 8728 / NCIMB 11950 / KT2440).